We begin with the raw amino-acid sequence, 108 residues long: Trp operon repressor homolog (108 aa).

A DNA-binding region spans residues glutamine 59–serine 82.

It belongs to the TrpR family. Homodimer.

Its subcellular location is the cytoplasm. In terms of biological role, this protein is an aporepressor. When complexed with L-tryptophan it binds the operator region of the trp operon and prevents the initiation of transcription. The protein is Trp operon repressor homolog of Aliivibrio fischeri (strain ATCC 700601 / ES114) (Vibrio fischeri).